We begin with the raw amino-acid sequence, 570 residues long: MSEKHPGPLVVEGKLTDAERMKLESNYLRGTIAEDLNDGLTGGFKGDNFLLIRFHGMYQQDDRDIRAERAEQKLEPRHAMLLRCRLPGGVITTKQWQAIDKFAGENTIYGSIRLTNRQTFQFHGILKKNVKPVHQMLHSVGLDALATANDMNRNVLCTSNPYESQLHAEAYEWAKKISEHLLPRTRAYAEIWLDQEKVATTDEEPILGQTYLPRKFKTTVVIPPQNDIDLHANDMNFVAIAENGKLVGFNLLVGGGLSIEHGNKKTYARTASEFGYLPLEHTLAVAEAVVTTQRDWGNRTDRKNAKTKYTLERVGVETFKAEVERRAGIKFEPIRPYEFTGRGDRIGWVKGIDDNWHLTLFIENGRILDYPGRPLKTGLLEIAKIHKGDFRITANQNLIIAGVPESEKAKIEKIAKESGLMNAVTPQRENSMACVSFPTCPLAMAEAERFLPSFIDKIDNLMAKHGVSDEHIVMRVTGCPNGCGRAMLAEVGLVGKAPGRYNLHLGGNRIGTRIPRMYKENITEPEILASLDELIGRWAKEREAGEGFGDFTVRAGIIRPVLDPARDLWD.

Residues Cys-434, Cys-440, Cys-479, and Cys-483 each coordinate [4Fe-4S] cluster. Cys-483 is a siroheme binding site.

This sequence belongs to the nitrite and sulfite reductase 4Fe-4S domain family. In terms of assembly, alpha(8)-beta(8). The alpha component is a flavoprotein, the beta component is a hemoprotein. Siroheme is required as a cofactor. It depends on [4Fe-4S] cluster as a cofactor.

It catalyses the reaction hydrogen sulfide + 3 NADP(+) + 3 H2O = sulfite + 3 NADPH + 4 H(+). It participates in sulfur metabolism; hydrogen sulfide biosynthesis; hydrogen sulfide from sulfite (NADPH route): step 1/1. Functionally, component of the sulfite reductase complex that catalyzes the 6-electron reduction of sulfite to sulfide. This is one of several activities required for the biosynthesis of L-cysteine from sulfate. The protein is Sulfite reductase [NADPH] hemoprotein beta-component of Escherichia coli (strain SMS-3-5 / SECEC).